A 248-amino-acid polypeptide reads, in one-letter code: Probable transcriptional regulatory protein Noc_0137 (248 aa).

It belongs to the TACO1 family.

The protein localises to the cytoplasm. The polypeptide is Probable transcriptional regulatory protein Noc_0137 (Nitrosococcus oceani (strain ATCC 19707 / BCRC 17464 / JCM 30415 / NCIMB 11848 / C-107)).